Reading from the N-terminus, the 245-residue chain is rRNA adenine N-6-methyltransferase (245 aa).

S-adenosyl-L-methionine-binding residues include Asn-10, Leu-12, Gly-37, Glu-58, Asp-83, and Asn-100.

This sequence belongs to the class I-like SAM-binding methyltransferase superfamily. rRNA adenine N(6)-methyltransferase family.

The enzyme catalyses adenosine(2085) in 23S rRNA + 2 S-adenosyl-L-methionine = N(6)-dimethyladenosine(2085) in 23S rRNA + 2 S-adenosyl-L-homocysteine + 2 H(+). Functionally, this protein produces a dimethylation of the adenine residue at position 2085 in 23S rRNA, resulting in reduced affinity between ribosomes and macrolide-lincosamide-streptogramin B antibiotics. The polypeptide is rRNA adenine N-6-methyltransferase (ermBC) (Escherichia coli).